Consider the following 823-residue polypeptide: Leucine--tRNA ligase (823 aa).

A 'HIGH' region motif is present at residues 42-52 (PYPSGTLHMGH). The short motif at 575-579 (KMSKS) is the 'KMSKS' region element. Lys-578 is a binding site for ATP.

The protein belongs to the class-I aminoacyl-tRNA synthetase family.

Its subcellular location is the cytoplasm. The enzyme catalyses tRNA(Leu) + L-leucine + ATP = L-leucyl-tRNA(Leu) + AMP + diphosphate. This chain is Leucine--tRNA ligase, found in Legionella pneumophila (strain Corby).